The chain runs to 260 residues: Voltage-dependent calcium channel gamma-6 subunit (260 aa).

A run of 4 helical transmembrane segments spans residues 43-63, 143-163, 169-189, and 221-241; these read LLVAIVGATLAVLAVGTEFWV, VIAVLGLTAMALGCLCVIMVL, FLLRLGAVCFGLSGLLLFVSL, and LGCGVGAGLILLLGGVCFLLL.

Belongs to the PMP-22/EMP/MP20 family. CACNG subfamily. Interacts with CACNA1C. Identified in a complex with the L-type calcium channel subunits CACNA1C, CACNA2D1 and either CACNB1 or CACNB2. In terms of tissue distribution, detected in heart atrium and ventricle, aorta and skeletal muscle. Detected in heart left ventricle.

It is found in the cell membrane. Regulates the activity of L-type calcium channels that contain CACNA1C as pore-forming subunit. This Rattus norvegicus (Rat) protein is Voltage-dependent calcium channel gamma-6 subunit (Cacng6).